We begin with the raw amino-acid sequence, 252 residues long: Triosephosphate isomerase (252 aa).

10-12 (NWK) lines the substrate pocket. The active-site Electrophile is His-96. Catalysis depends on Glu-168, which acts as the Proton acceptor. Substrate contacts are provided by residues Gly-174, Ser-214, and 235–236 (GG).

The protein belongs to the triosephosphate isomerase family. Homodimer.

It localises to the cytoplasm. The enzyme catalyses D-glyceraldehyde 3-phosphate = dihydroxyacetone phosphate. Its pathway is carbohydrate biosynthesis; gluconeogenesis. It functions in the pathway carbohydrate degradation; glycolysis; D-glyceraldehyde 3-phosphate from glycerone phosphate: step 1/1. Involved in the gluconeogenesis. Catalyzes stereospecifically the conversion of dihydroxyacetone phosphate (DHAP) to D-glyceraldehyde-3-phosphate (G3P). In Lactococcus lactis subsp. lactis (strain IL1403) (Streptococcus lactis), this protein is Triosephosphate isomerase.